Consider the following 90-residue polypeptide: uncharacterized protein (90 aa).

This is an uncharacterized protein from Saccharolobus islandicus (Sulfolobus islandicus).